The sequence spans 411 residues: LL-diaminopimelate aminotransferase (411 aa).

Substrate is bound by residues Tyr15 and Gly42. Pyridoxal 5'-phosphate-binding positions include Tyr72, 108-109, Tyr132, Asn187, Tyr218, and 246-248; these read AK and SFS. 3 residues coordinate substrate: Lys109, Tyr132, and Asn187. Lys249 is subject to N6-(pyridoxal phosphate)lysine. Pyridoxal 5'-phosphate contacts are provided by Arg257 and Asn292. Positions 292 and 388 each coordinate substrate.

The protein belongs to the class-I pyridoxal-phosphate-dependent aminotransferase family. LL-diaminopimelate aminotransferase subfamily. In terms of assembly, homodimer. It depends on pyridoxal 5'-phosphate as a cofactor.

It catalyses the reaction (2S,6S)-2,6-diaminopimelate + 2-oxoglutarate = (S)-2,3,4,5-tetrahydrodipicolinate + L-glutamate + H2O + H(+). It participates in amino-acid biosynthesis; L-lysine biosynthesis via DAP pathway; LL-2,6-diaminopimelate from (S)-tetrahydrodipicolinate (aminotransferase route): step 1/1. Involved in the synthesis of meso-diaminopimelate (m-DAP or DL-DAP), required for both lysine and peptidoglycan biosynthesis. Catalyzes the direct conversion of tetrahydrodipicolinate to LL-diaminopimelate. The polypeptide is LL-diaminopimelate aminotransferase (Crocosphaera subtropica (strain ATCC 51142 / BH68) (Cyanothece sp. (strain ATCC 51142))).